A 157-amino-acid chain; its full sequence is MSAPFEERSGVVPCGTPWGQWYQTLEEVFIEVQVPPGTRAQDIQCGLQSRHVALAVGGREILKGKLFDSTIADEGTWTLEDRKMVRIVLTKTKRDAANCWTSLLESEYAADPWVQDQMQRKLTLERFQKENPGFDFSGAEISGNYTKGGPDFSNLEK.

N-acetylserine is present on Ser-2. In terms of domain architecture, CS spans Cys-14 to Leu-104. The tract at residues Phe-134–Lys-157 is disordered. Ser-142 is subject to Phosphoserine. Tyr-145 carries the post-translational modification Phosphotyrosine.

As to quaternary structure, interacts with LIS1.

The protein localises to the chromosome. Its subcellular location is the centromere. It is found in the kinetochore. It localises to the cytoplasm. The protein resides in the cytoskeleton. The protein localises to the microtubule organizing center. Its subcellular location is the centrosome. It is found in the spindle pole. May regulate the LIS1/dynein pathway by stabilizing LIS1 with Hsp90 chaperone. This is NudC domain-containing protein 2 (Nudcd2) from Mus musculus (Mouse).